We begin with the raw amino-acid sequence, 501 residues long: uncharacterized protein (501 aa).

A helical transmembrane segment spans residues 26-46 (ILLLLLGLIVLVNIGINVATM). 2 disordered regions span residues 316-384 (RGTE…VRRR) and 409-501 (EASH…EKLN). Residues 476 to 490 (RSSSLPPASTSTLRP) are compositionally biased toward low complexity.

It localises to the membrane. This is an uncharacterized protein from Homo sapiens (Human).